The following is a 307-amino-acid chain: Delta-9 acyl-lipid desaturase 2 (307 aa).

Residues 1–17 (MSVTSTVEENHQKNPST) show a composition bias toward polar residues. The tract at residues 1-21 (MSVTSTVEENHQKNPSTPAAV) is disordered. A helical transmembrane segment spans residues 53–73 (LALLAPFYFTWSALWVTFLFY). Residues histidine 85 and histidine 90 each coordinate Fe cation. A Histidine box-1 motif is present at residues 85 to 90 (HRNLAH). A helical transmembrane segment spans residues 99–119 (LEYLLAYCALLAIQGDPIDWV). Fe cation is bound by residues histidine 122, histidine 125, and histidine 126. Positions 122-126 (HRYHH) match the Histidine box-2 motif. 2 helical membrane-spanning segments follow: residues 182–202 (VLFH…MSFV) and 204–224 (WGMG…NSLC). Fe cation is bound by residues histidine 225, histidine 254, histidine 257, and histidine 258. A Histidine box-3 motif is present at residues 254–258 (HNNHH).

This sequence belongs to the fatty acid desaturase type 1 family. Requires Fe cation as cofactor. In terms of tissue distribution, strongly expressed in flowers, roots, leaves, seedpods, and inflorescence meristems.

The protein resides in the endoplasmic reticulum membrane. The enzyme catalyses a 1-hexacosanoyl-2-acyl-phosphoglycerolipid + 2 Fe(II)-[cytochrome b5] + O2 + 2 H(+) = a 1-[(17Z)-hexacos-17-enoyl]-2-acyl-phosphoglycerolipid + 2 Fe(III)-[cytochrome b5] + 2 H2O. It carries out the reaction a 1-tetracosanoyl-2-acyl-phosphoglycerolipid + 2 Fe(II)-[cytochrome b5] + O2 + 2 H(+) = a 1-[(15Z)-tetracos-15-enoyl]-2-acyl-phosphoglycerolipid + 2 Fe(III)-[cytochrome b5] + 2 H2O. The protein operates within lipid metabolism; polyunsaturated fatty acid biosynthesis. Its function is as follows. Involved in delta-9 desaturation of fatty acids. Plays a role in the production of very-long-chain monounsaturated fatty acids (VLCMUFAs) in seed lipids and in membrane phospholipids and sphingolipids. Acts as C-16:0 desaturase for monogalactosyl diacylglycerol (MGDG) and phosphatidylglycerol (PG). Is an essential component for cold adaptation. Is essential to adjust the acyl composition of organelle membrane lipid composition in response to cold stress. In Arabidopsis thaliana (Mouse-ear cress), this protein is Delta-9 acyl-lipid desaturase 2.